A 194-amino-acid chain; its full sequence is Small ribosomal subunit protein uS4 (194 aa).

K66 is subject to N6-acetyllysine. K93 is covalently cross-linked (Glycyl lysine isopeptide (Lys-Gly) (interchain with G-Cter in SUMO2)). The S4 RNA-binding domain maps to 108-182; the sequence is RRLQTQVFKL…VKRKNAKKGQ (75 aa). K116 is modified (N6-acetyllysine). A Glycyl lysine isopeptide (Lys-Gly) (interchain with G-Cter in SUMO2) cross-link involves residue K139. S153 bears the Phosphoserine mark. At K155 the chain carries N6-acetyllysine. Positions 162-194 are disordered; sequence RSPYGGGRPGRVKRKNAKKGQGGAGAGDDEEED. The residue at position 163 (S163) is a Phosphoserine.

The protein belongs to the universal ribosomal protein uS4 family. Component of the small ribosomal subunit. Part of the small subunit (SSU) processome, composed of more than 70 proteins and the RNA chaperone small nucleolar RNA (snoRNA) U3.

It is found in the cytoplasm. It localises to the nucleus. The protein resides in the nucleolus. Component of the small ribosomal subunit. The ribosome is a large ribonucleoprotein complex responsible for the synthesis of proteins in the cell. Part of the small subunit (SSU) processome, first precursor of the small eukaryotic ribosomal subunit. During the assembly of the SSU processome in the nucleolus, many ribosome biogenesis factors, an RNA chaperone and ribosomal proteins associate with the nascent pre-rRNA and work in concert to generate RNA folding, modifications, rearrangements and cleavage as well as targeted degradation of pre-ribosomal RNA by the RNA exosome. In Papio anubis (Olive baboon), this protein is Small ribosomal subunit protein uS4 (RPS9).